Consider the following 914-residue polypeptide: Probable dipeptidyl-aminopeptidase B (914 aa).

Basic and acidic residues predominate over residues 1–10 (MATFSDHETS). Residues 1–63 (MATFSDHETS…TGMDNGDRYR (63 aa)) form a disordered region. Over 1 to 91 (MATFSDHETS…KAATGGRARR (91 aa)) the chain is Cytoplasmic. A compositionally biased stretch (low complexity) spans 20–35 (STSSASQTSSDSGLSS). Positions 45–56 (QPFSAPNGTTGM) are enriched in polar residues. Residues 92–112 (IFWLLVLLCFGGWLLAFVLFL) traverse the membrane as a helical; Signal-anchor for type II membrane protein segment. The Vacuolar segment spans residues 113–914 (TGGRANYQSA…RFKRSLPVLV (802 aa)). 3 N-linked (GlcNAc...) asparagine glycosylation sites follow: Asn-348, Asn-565, and Asn-639. Residue Ser-753 is the Charge relay system of the active site. An N-linked (GlcNAc...) asparagine glycan is attached at Asn-807. Residues Asp-830 and His-863 each act as charge relay system in the active site.

The protein belongs to the peptidase S9B family.

The protein resides in the vacuole membrane. The catalysed reaction is Release of an N-terminal dipeptide, Xaa-Yaa-|-Zaa-, from a polypeptide, preferentially when Yaa is Pro, provided Zaa is neither Pro nor hydroxyproline.. Its function is as follows. Type IV dipeptidyl-peptidase which removes N-terminal dipeptides sequentially from polypeptides having unsubstituted N-termini provided that the penultimate residue is proline. This Aspergillus clavatus (strain ATCC 1007 / CBS 513.65 / DSM 816 / NCTC 3887 / NRRL 1 / QM 1276 / 107) protein is Probable dipeptidyl-aminopeptidase B (dapB).